The following is a 420-amino-acid chain: Glycogen synthase kinase-3 beta (420 aa).

Positions 1-22 are enriched in polar residues; the sequence is MSGRPRTTSFAESCKPVQQPSA. The tract at residues 1 to 35 is disordered; that stretch reads MSGRPRTTSFAESCKPVQQPSAFGSMKVSRDKDGS. The residue at position 9 (Ser-9) is a Phosphoserine; by PKB/AKT1, RPS6KA3 and SGK3. Residue Cys-14 is the site of S-palmitoyl cysteine attachment. The 285-residue stretch at 56-340 folds into the Protein kinase domain; that stretch reads YTDTKVIGNG…PLEACAHSFF (285 aa). Residues 62 to 70 and Lys-85 each bind ATP; that span reads IGNGSFGVV. The Proton acceptor role is filled by Asp-181. Tyr-216 carries the post-translational modification Phosphotyrosine. Composition is skewed to low complexity over residues 387 to 401 and 409 to 420; these read AASTPTNATAASDAN and NNAAFASASNST. The interval 387–420 is disordered; the sequence is AASTPTNATAASDANAGDRGQTNNAAFASASNST. Ser-389 carries the post-translational modification Phosphoserine. At Thr-390 the chain carries Phosphothreonine.

Belongs to the protein kinase superfamily. CMGC Ser/Thr protein kinase family. GSK-3 subfamily. In terms of assembly, monomer. Interacts with DAB2IP (via C2 domain); the interaction stimulates GSK3B kinase activation. Interacts (via C2 domain) with PPP2CA. Interacts with ARRB2, AXIN1, CABYR, DISC1, MMP2, MUC1, NIN, PRUNE1 and ZBED3. Interacts with AXIN1; the interaction mediates hyperphosphorylation of CTNNB1 leading to its ubiquitination and destruction. Interacts with and phosphorylates SNAI1. Interacts with DNM1L (via a C-terminal domain). Found in a complex composed of MACF1, APC, AXIN1, CTNNB1 and GSK3B. Interacts with SGK3. Interacts with the CLOCK-BMAL1 heterodimer. Interacts with the BMAL1. Interacts with CTNND2. The complex composed, at least, of APC, CTNNB1 and GSK3B interacts with JPT1; the interaction requires the inactive form of GSK3B (phosphorylated at 'Ser-9'). Forms a complex composed of PRKAR2A or PRKAR2B, GSK3B and GSKIP through GSKIP interaction; facilitates PKA-induced phosphorylation and regulates GSK3B activity. Interacts with GSKIP. Interacts with GID8. Interacts with PIWIL2. Interacts with LMBR1L. Interacts with DDX3X. Interacts with BIRC2. Interacts with TNFRSF10B; TNFRSF10B stimulation inhibits GSK3B kinase activity. Found in a complex with SLC39A6, SLC39A10 and with GSK3B that controls NCAM1 phosphorylation. Interacts with PKP3 (via ARM repeats); the interaction may be involved in PKP3 protein degradation. Post-translationally, phosphorylated by AKT1 and ILK1. Upon insulin-mediated signaling, the activated PKB/AKT1 and RPS6KA3 protein kinases phosphorylate and deactivate GSK3B, resulting in the dephosphorylation and activation of GYS1. Activated by phosphorylation at Tyr-216. Inactivated by phosphorylation at Ser-9. In terms of processing, mono-ADP-ribosylation by PARP10 negatively regulates kinase activity. Palmitoylated. Palmitoylation by ZDHHC4 prevents AKT1-mediated phosphorylation.

It localises to the cytoplasm. It is found in the nucleus. The protein localises to the cell membrane. It catalyses the reaction L-seryl-[tau protein] + ATP = O-phospho-L-seryl-[tau protein] + ADP + H(+). It carries out the reaction L-threonyl-[tau protein] + ATP = O-phospho-L-threonyl-[tau protein] + ADP + H(+). The enzyme catalyses L-seryl-[protein] + ATP = O-phospho-L-seryl-[protein] + ADP + H(+). The catalysed reaction is L-threonyl-[protein] + ATP = O-phospho-L-threonyl-[protein] + ADP + H(+). With respect to regulation, activated by phosphorylation at Tyr-216. In response to insulin, inhibited by phosphorylation at Ser-9 by PKB/AKT1; phosphorylation at this site causes a conformational change, preventing access of substrates to the active site. Inhibited by IL22 treatment which also triggers phosphorylation at Ser-9, promoting inactivation. Inhibited by lithium. Functionally, constitutively active protein kinase that acts as a negative regulator in the hormonal control of glucose homeostasis, Wnt signaling and regulation of transcription factors and microtubules, by phosphorylating and inactivating glycogen synthase (GYS1 or GYS2), EIF2B, CTNNB1/beta-catenin, APC, AXIN1, DPYSL2/CRMP2, JUN, NFATC1/NFATC, MAPT/TAU and MACF1. Requires primed phosphorylation of the majority of its substrates. In skeletal muscle, contributes to insulin regulation of glycogen synthesis by phosphorylating and inhibiting GYS1 activity and hence glycogen synthesis. May also mediate the development of insulin resistance by regulating activation of transcription factors. Regulates protein synthesis by controlling the activity of initiation factor 2B (EIF2BE/EIF2B5) in the same manner as glycogen synthase. In Wnt signaling, GSK3B forms a multimeric complex with APC, AXIN1 and CTNNB1/beta-catenin and phosphorylates the N-terminus of CTNNB1 leading to its degradation mediated by ubiquitin/proteasomes. Phosphorylates JUN at sites proximal to its DNA-binding domain, thereby reducing its affinity for DNA. Phosphorylates NFATC1/NFATC on conserved serine residues promoting NFATC1/NFATC nuclear export, shutting off NFATC1/NFATC gene regulation, and thereby opposing the action of calcineurin. Phosphorylates MAPT/TAU on 'Thr-548', decreasing significantly MAPT/TAU ability to bind and stabilize microtubules. MAPT/TAU is the principal component of neurofibrillary tangles in Alzheimer disease. Plays an important role in ERBB2-dependent stabilization of microtubules at the cell cortex. Phosphorylates MACF1, inhibiting its binding to microtubules which is critical for its role in bulge stem cell migration and skin wound repair. Probably regulates NF-kappa-B (NFKB1) at the transcriptional level and is required for the NF-kappa-B-mediated anti-apoptotic response to TNF-alpha (TNF/TNFA). Negatively regulates replication in pancreatic beta-cells, resulting in apoptosis, loss of beta-cells and diabetes. Through phosphorylation of the anti-apoptotic protein MCL1, may control cell apoptosis in response to growth factors deprivation. Phosphorylates MUC1 in breast cancer cells, decreasing the interaction of MUC1 with CTNNB1/beta-catenin. Is necessary for the establishment of neuronal polarity and axon outgrowth. Phosphorylates MARK2, leading to inhibition of its activity. Phosphorylates SIK1 at 'Thr-182', leading to sustainment of its activity. Phosphorylates ZC3HAV1 which enhances its antiviral activity. Phosphorylates SNAI1, leading to its ubiquitination and proteasomal degradation. Phosphorylates SFPQ at 'Thr-687' upon T-cell activation. Phosphorylates NR1D1 st 'Ser-55' and 'Ser-59' and stabilizes it by protecting it from proteasomal degradation. Regulates the circadian clock via phosphorylation of the major clock components including BMAL1, CLOCK and PER2. Phosphorylates CLOCK AT 'Ser-427' and targets it for proteasomal degradation. Phosphorylates BMAL1 at 'Ser-17' and 'Ser-21' and primes it for ubiquitination and proteasomal degradation. Phosphorylates FBXL2 at 'Thr-404' and primes it for ubiquitination by the SCF(FBXO3) complex and proteasomal degradation. Phosphorylates OGT at 'Ser-3' or 'Ser-4' which positively regulates its activity. Phosphorylates MYCN in neuroblastoma cells which may promote its degradation. Regulates the circadian rhythmicity of hippocampal long-term potentiation and BMAL1 and PER2 expression. Acts as a regulator of autophagy by mediating phosphorylation of KAT5/TIP60 under starvation conditions, activating KAT5/TIP60 acetyltransferase activity and promoting acetylation of key autophagy regulators, such as ULK1 and RUBCNL/Pacer. Negatively regulates extrinsic apoptotic signaling pathway via death domain receptors. Promotes the formation of an anti-apoptotic complex, made of DDX3X, BRIC2 and GSK3B, at death receptors, including TNFRSF10B. The anti-apoptotic function is most effective with weak apoptotic signals and can be overcome by stronger stimulation. Phosphorylates E2F1, promoting the interaction between E2F1 and USP11, stabilizing E2F1 and promoting its activity. Phosphorylates mTORC2 complex component RICTOR at 'Ser-1235' in response to endoplasmic stress, inhibiting mTORC2. Phosphorylates FXR1, promoting FXR1 ubiquitination by the SCF(FBXO4) complex and FXR1 degradation by the proteasome. Phosphorylates interleukin-22 receptor subunit IL22RA1, preventing its proteasomal degradation. The protein is Glycogen synthase kinase-3 beta of Spermophilus citellus (European ground squirrel).